Consider the following 166-residue polypeptide: Protein C2-DOMAIN ABA-RELATED 11 (166 aa).

M1 is modified (N-acetylmethionine). A C2 domain is found at 1–103 (MGEPLGLLQV…ISVARLRHVV (103 aa)). G2 bears the N-acetylglycine; in Protein C2-DOMAIN ABA-RELATED 11, N-terminally processed mark. Residues R21, D22, D27, D73, K74, D75, and D81 each contribute to the Ca(2+) site.

The protein belongs to the plant CAR protein family. As to quaternary structure, binds to PYR/PYL/RCAR abscisic acid intracellular receptors in an ABA-independent manner, both at the plasma membrane and in the nucleus.

Its subcellular location is the cell membrane. It localises to the nucleus. Its function is as follows. Stimulates the GTPase/ATPase activities of Obg-like ATPases. Mediates the transient calcium-dependent interaction of PYR/PYL/RCAR abscisic acid (ABA) receptors with the plasma membrane and thus regulates ABA sensitivity. The protein is Protein C2-DOMAIN ABA-RELATED 11 of Arabidopsis thaliana (Mouse-ear cress).